The following is a 265-amino-acid chain: Putative 2-aminoethylphosphonate transport system permease protein PhnV (265 aa).

6 helical membrane passes run 13-33 (GVVA…VILM), 69-89 (LTIG…AALA), 104-124 (VFYL…LVAF), 131-151 (MNGT…AFTF), 185-205 (LPLL…LSMG), and 233-253 (NIAD…LLMM). The 189-residue stretch at 65–253 (LLASLTIGFC…LVAITLLLMM (189 aa)) folds into the ABC transmembrane type-1 domain.

The protein belongs to the binding-protein-dependent transport system permease family.

The protein localises to the cell inner membrane. Functionally, probably part of the PhnSTUV complex (TC 3.A.1.11.5) involved in 2-aminoethylphosphonate import. Probably responsible for the translocation of the substrate across the membrane. The polypeptide is Putative 2-aminoethylphosphonate transport system permease protein PhnV (phnV) (Salmonella typhimurium (strain LT2 / SGSC1412 / ATCC 700720)).